The following is a 504-amino-acid chain: Ribose import ATP-binding protein RbsA (504 aa).

2 consecutive ABC transporter domains span residues 6–242 and 252–495; these read LELK…VGRR and VRHG…VGKT. 38–45 is an ATP binding site; sequence GENGAGKS.

Belongs to the ABC transporter superfamily. Ribose importer (TC 3.A.1.2.1) family. As to quaternary structure, the complex is composed of an ATP-binding protein (RbsA), two transmembrane proteins (RbsC) and a solute-binding protein (RbsB).

The protein resides in the cell inner membrane. The catalysed reaction is D-ribose(out) + ATP + H2O = D-ribose(in) + ADP + phosphate + H(+). Functionally, part of the ABC transporter complex RbsABC involved in ribose import. Responsible for energy coupling to the transport system. In Photobacterium profundum (strain SS9), this protein is Ribose import ATP-binding protein RbsA.